Reading from the N-terminus, the 782-residue chain is Glucocorticoid receptor (782 aa).

Residues 1–20 (MDPKESLTPPSREEIPSSVL) are disordered. A modulating region spans residues 1 to 425 (MDPKESLTPP…SAATGPPPKL (425 aa)). Thr8 is modified (phosphothreonine). An Omega-N-methylarginine modification is found at Arg24. Ser46 bears the Phosphoserine mark. The disordered stretch occupies residues 48 to 79 (SLAAVSQPDSKQQRLAVDFPKGSGSNAQQPDL). 6 positions are modified to phosphoserine: Ser114, Ser135, Ser142, Ser208, Ser216, and Ser231. Residues 130-184 (LSRSTSVPENPKSSASAAGPAAPAEKAFPKTHSDGAPEQPNVKGQTGTNGGNVKL) form a disordered region. The span at 140 to 155 (PKSSASAAGPAAPAEK) shows a compositional bias: low complexity. Lys263 participates in a covalent cross-link: Glycyl lysine isopeptide (Lys-Gly) (interchain with G-Cter in SUMO2). Ser272 carries the post-translational modification Phosphoserine. Residues Lys282 and Lys298 each participate in a glycyl lysine isopeptide (Lys-Gly) (interchain with G-Cter in SUMO); alternate cross-link. Glycyl lysine isopeptide (Lys-Gly) (interchain with G-Cter in SUMO2); alternate cross-links involve residues Lys282 and Lys298. 2 positions are modified to phosphoserine: Ser312 and Ser410. Lys424 participates in a covalent cross-link: Glycyl lysine isopeptide (Lys-Gly) (interchain with G-Cter in ubiquitin). NR C4-type zinc fingers lie at residues 426-446 (CLVC…CGSC) and 462-486 (CAGR…YRKC). The segment at residues 426–491 (CLVCSDEASG…RYRKCLQAGM (66 aa)) is a DNA-binding region (nuclear receptor). Residues Lys485, Lys497, Lys499, and Lys500 each carry the N6-acetyllysine modification. The interaction with CLOCK stretch occupies residues 490 to 782 (GMNLEARKTK…NIKKLLFHQK (293 aa)). The hinge stretch occupies residues 492–528 (NLEARKTKKKIKGIQQATTGVSQETSENSANKTIVPA). The region spanning 529–763 (TLPQLTPTLV…FPEMLAEIIT (235 aa)) is the NR LBD domain. The interaction with CRY1 stretch occupies residues 537 to 702 (LVSLLEVIEP…EIRMTYIKEL (166 aa)). Lys708 is covalently cross-linked (Glycyl lysine isopeptide (Lys-Gly) (interchain with G-Cter in SUMO)).

It belongs to the nuclear hormone receptor family. NR3 subfamily. Heteromultimeric cytoplasmic complex with HSP90AA1, HSPA1A/HSPA1B, and FKBP5 or another immunophilin such as PPID, STIP1, or the immunophilin homolog PPP5C. Upon ligand binding FKBP5 dissociates from the complex and FKBP4 takes its place, thereby linking the complex to dynein and mediating transport to the nucleus, where the complex dissociates. Probably forms a complex composed of chaperones HSP90 and HSP70, co-chaperones CDC37, PPP5C, TSC1 and client protein TSC2, CDK4, AKT, RAF1 and NR3C1; this complex does not contain co-chaperones STIP1/HOP and PTGES3/p23. Directly interacts with UNC45A. Binds to DNA as a homodimer, and as heterodimer with NR3C2 or the retinoid X receptor. Binds STAT5A and STAT5B homodimers and heterodimers. Interacts with NRIP1, POU2F1, POU2F2 and TRIM28. Interacts with several coactivator complexes, including the SMARCA4 complex, CREBBP/EP300, TADA2L (Ada complex) and p160 coactivators such as NCOA2 and NCOA6. Interaction with BAG1 inhibits transactivation. Interacts with HEXIM1 and TGFB1I1. Interacts with NCOA1. Interacts with NCOA3, SMARCA4, SMARCC1, SMARCD1, and SMARCE1. Interacts with CLOCK, CRY1 and CRY2 in a ligand-dependent fashion. Interacts with CIART. Interacts with RWDD3. Interacts with UBE2I/UBC9 and this interaction is enhanced in the presence of RWDD3. Interacts with GRIP1. Interacts with NR4A3 (via nuclear receptor DNA-binding domain), represses transcription activity of NR4A3 on the POMC promoter Nur response element (NurRE). Directly interacts with PNRC2 to attract and form a complex with UPF1 and DCP1A; the interaction leads to rapid mRNA degradation. Interacts with GSK3B. Interacts with FNIP1 and FNIP2. Interacts (via C-terminus) with HNRNPU (via C-terminus). Interacts with MCM3AP. Interacts (via domain NR LBD) with HSP90AA1 and HSP90AB1. In the absence of hormonal ligand, interacts with TACC1. Interacts (via NR LBD domain) with ZNF764 (via KRAB domain); the interaction regulates transcription factor activity of NR3C1 by directing its actions toward certain biologic pathways. In terms of processing, acetylation by CLOCK reduces its binding to glucocorticoid response elements and its transcriptional activity. Post-translationally, increased proteasome-mediated degradation in response to glucocorticoids. Phosphorylated in the absence of hormone; becomes hyperphosphorylated in the presence of glucocorticoid. The Ser-208, Ser-231 and Ser-410-phosphorylated forms are mainly cytoplasmic, and the Ser-216-phosphorylated form is nuclear. Phosphorylation at Ser-216 increases transcriptional activity. Phosphorylation at Ser-208, Ser-231 and Ser-410 decreases signaling capacity. Phosphorylation at Ser-410 may protect from glucocorticoid-induced apoptosis. Phosphorylation at Ser-208 and Ser-216 is not required in regulation of chromosome segregation. May be dephosphorylated by PPP5C, attenuates NR3C1 action. In terms of processing, ubiquitinated by UBR5, leading to its degradation: UBR5 specifically recognizes and binds ligand-bound NR3C1 when it is not associated with coactivators (NCOAs). In presence of NCOAs, the UBR5-degron is not accessible, preventing its ubiquitination and degradation. Post-translationally, sumoylation at Lys-282 and Lys-298 negatively regulates its transcriptional activity. Sumoylation at Lys-708 positively regulates its transcriptional activity in the presence of RWDD3. Sumoylation at Lys-282 and Lys-298 is dispensable whereas sumoylation at Lys-708 is critical for the stimulatory effect of RWDD3 on its transcriptional activity. Heat shock increases sumoylation in a RWDD3-dependent manner.

The protein localises to the cytoplasm. It is found in the nucleus. It localises to the mitochondrion. The protein resides in the cytoskeleton. Its subcellular location is the spindle. The protein localises to the microtubule organizing center. It is found in the centrosome. It localises to the chromosome. The protein resides in the nucleoplasm. Functionally, receptor for glucocorticoids (GC). Has a dual mode of action: as a transcription factor that binds to glucocorticoid response elements (GRE), both for nuclear and mitochondrial DNA, and as a modulator of other transcription factors. Affects inflammatory responses, cellular proliferation and differentiation in target tissues. Involved in chromatin remodeling. Plays a role in rapid mRNA degradation by binding to the 5' UTR of target mRNAs and interacting with PNRC2 in a ligand-dependent manner which recruits the RNA helicase UPF1 and the mRNA-decapping enzyme DCP1A, leading to RNA decay. Could act as a coactivator for STAT5-dependent transcription upon growth hormone (GH) stimulation and could reveal an essential role of hepatic GR in the control of body growth. Mediates glucocorticoid-induced apoptosis. Promotes accurate chromosome segregation during mitosis. May act as a tumor suppressor. May play a negative role in adipogenesis through the regulation of lipolytic and antilipogenic gene expression. This chain is Glucocorticoid receptor (NR3C1), found in Sus scrofa (Pig).